We begin with the raw amino-acid sequence, 44 residues long: Small, acid-soluble spore protein N (44 aa).

Residues 1 to 44 form a disordered region; it reads MGNPKKNSKDFVPNHIGTQSKKAGGNKGKQMQDTTGKQPIVDNG.

This sequence belongs to the SspN family.

Its subcellular location is the spore core. In Bacillus cytotoxicus (strain DSM 22905 / CIP 110041 / 391-98 / NVH 391-98), this protein is Small, acid-soluble spore protein N.